We begin with the raw amino-acid sequence, 678 residues long: DNA ligase (678 aa).

Residues 34–38 (DSEYD), 83–84 (SL), and Glu-114 each bind NAD(+). Lys-116 functions as the N6-AMP-lysine intermediate in the catalytic mechanism. Residues Arg-137, Glu-176, Lys-293, and Lys-317 each coordinate NAD(+). Residues Cys-411, Cys-414, Cys-429, and Cys-435 each coordinate Zn(2+). One can recognise a BRCT domain in the interval 594–678 (PTRQPLNGES…LMAGYGQTLS (85 aa)).

It belongs to the NAD-dependent DNA ligase family. LigA subfamily. Mg(2+) serves as cofactor. The cofactor is Mn(2+).

The catalysed reaction is NAD(+) + (deoxyribonucleotide)n-3'-hydroxyl + 5'-phospho-(deoxyribonucleotide)m = (deoxyribonucleotide)n+m + AMP + beta-nicotinamide D-nucleotide.. In terms of biological role, DNA ligase that catalyzes the formation of phosphodiester linkages between 5'-phosphoryl and 3'-hydroxyl groups in double-stranded DNA using NAD as a coenzyme and as the energy source for the reaction. It is essential for DNA replication and repair of damaged DNA. The chain is DNA ligase from Acinetobacter baumannii (strain SDF).